A 425-amino-acid chain; its full sequence is Glutamyl-tRNA reductase (425 aa).

Substrate contacts are provided by residues 49–52 (TCNR), Ser-107, 112–114 (EPQ), and Gln-118. The Nucleophile role is filled by Cys-50. 187-192 (GAGETI) lines the NADP(+) pocket.

Belongs to the glutamyl-tRNA reductase family. Homodimer.

The enzyme catalyses (S)-4-amino-5-oxopentanoate + tRNA(Glu) + NADP(+) = L-glutamyl-tRNA(Glu) + NADPH + H(+). The protein operates within porphyrin-containing compound metabolism; protoporphyrin-IX biosynthesis; 5-aminolevulinate from L-glutamyl-tRNA(Glu): step 1/2. In terms of biological role, catalyzes the NADPH-dependent reduction of glutamyl-tRNA(Glu) to glutamate 1-semialdehyde (GSA). The chain is Glutamyl-tRNA reductase from Pseudomonas putida (strain ATCC 47054 / DSM 6125 / CFBP 8728 / NCIMB 11950 / KT2440).